Here is a 207-residue protein sequence, read N- to C-terminus: Ribosomal RNA large subunit methyltransferase E (207 aa).

S-adenosyl-L-methionine-binding residues include glycine 60, tryptophan 62, aspartate 80, aspartate 96, and aspartate 121. The Proton acceptor role is filled by lysine 161.

The protein belongs to the class I-like SAM-binding methyltransferase superfamily. RNA methyltransferase RlmE family.

The protein resides in the cytoplasm. The catalysed reaction is uridine(2552) in 23S rRNA + S-adenosyl-L-methionine = 2'-O-methyluridine(2552) in 23S rRNA + S-adenosyl-L-homocysteine + H(+). Its function is as follows. Specifically methylates the uridine in position 2552 of 23S rRNA at the 2'-O position of the ribose in the fully assembled 50S ribosomal subunit. The sequence is that of Ribosomal RNA large subunit methyltransferase E from Methylobacillus flagellatus (strain ATCC 51484 / DSM 6875 / VKM B-1610 / KT).